The primary structure comprises 114 residues: Putative pterin-4-alpha-carbinolamine dehydratase (114 aa).

Belongs to the pterin-4-alpha-carbinolamine dehydratase family.

The catalysed reaction is (4aS,6R)-4a-hydroxy-L-erythro-5,6,7,8-tetrahydrobiopterin = (6R)-L-erythro-6,7-dihydrobiopterin + H2O. This Pseudoalteromonas translucida (strain TAC 125) protein is Putative pterin-4-alpha-carbinolamine dehydratase.